Here is a 111-residue protein sequence, read N- to C-terminus: Large ribosomal subunit protein uL22 (111 aa).

Belongs to the universal ribosomal protein uL22 family. Part of the 50S ribosomal subunit.

In terms of biological role, this protein binds specifically to 23S rRNA; its binding is stimulated by other ribosomal proteins, e.g. L4, L17, and L20. It is important during the early stages of 50S assembly. It makes multiple contacts with different domains of the 23S rRNA in the assembled 50S subunit and ribosome. Its function is as follows. The globular domain of the protein is located near the polypeptide exit tunnel on the outside of the subunit, while an extended beta-hairpin is found that lines the wall of the exit tunnel in the center of the 70S ribosome. The chain is Large ribosomal subunit protein uL22 from Protochlamydia amoebophila (strain UWE25).